The sequence spans 228 residues: 5'-methylthioadenosine/S-adenosylhomocysteine nucleosidase (228 aa).

Catalysis depends on glutamate 11, which acts as the Proton acceptor. Substrate is bound by residues glycine 77, isoleucine 151, and 172–173 (ME). The active-site Proton donor is the aspartate 196.

It belongs to the PNP/UDP phosphorylase family. MtnN subfamily.

The catalysed reaction is S-adenosyl-L-homocysteine + H2O = S-(5-deoxy-D-ribos-5-yl)-L-homocysteine + adenine. The enzyme catalyses S-methyl-5'-thioadenosine + H2O = 5-(methylsulfanyl)-D-ribose + adenine. It carries out the reaction 5'-deoxyadenosine + H2O = 5-deoxy-D-ribose + adenine. The protein operates within amino-acid biosynthesis; L-methionine biosynthesis via salvage pathway; S-methyl-5-thio-alpha-D-ribose 1-phosphate from S-methyl-5'-thioadenosine (hydrolase route): step 1/2. In terms of biological role, catalyzes the irreversible cleavage of the glycosidic bond in both 5'-methylthioadenosine (MTA) and S-adenosylhomocysteine (SAH/AdoHcy) to adenine and the corresponding thioribose, 5'-methylthioribose and S-ribosylhomocysteine, respectively. Also cleaves 5'-deoxyadenosine, a toxic by-product of radical S-adenosylmethionine (SAM) enzymes, into 5-deoxyribose and adenine. In Staphylococcus haemolyticus (strain JCSC1435), this protein is 5'-methylthioadenosine/S-adenosylhomocysteine nucleosidase.